The following is a 357-amino-acid chain: Anthranilate phosphoribosyltransferase (357 aa).

5-phospho-alpha-D-ribose 1-diphosphate-binding positions include Gly-91, 94–95 (GD), Thr-99, 101–104 (NIST), 119–127 (KHGNRSVSS), and Ser-131. Gly-91 is a binding site for anthranilate. Ser-103 contributes to the Mg(2+) binding site. Asn-122 serves as a coordination point for anthranilate. Arg-177 is an anthranilate binding site. Positions 235 and 236 each coordinate Mg(2+).

It belongs to the anthranilate phosphoribosyltransferase family. In terms of assembly, homodimer. Mg(2+) is required as a cofactor.

It catalyses the reaction N-(5-phospho-beta-D-ribosyl)anthranilate + diphosphate = 5-phospho-alpha-D-ribose 1-diphosphate + anthranilate. The protein operates within amino-acid biosynthesis; L-tryptophan biosynthesis; L-tryptophan from chorismate: step 2/5. Its function is as follows. Catalyzes the transfer of the phosphoribosyl group of 5-phosphorylribose-1-pyrophosphate (PRPP) to anthranilate to yield N-(5'-phosphoribosyl)-anthranilate (PRA). In Shewanella baltica (strain OS195), this protein is Anthranilate phosphoribosyltransferase.